The following is a 466-amino-acid chain: Phosphomethylpyrimidine synthase (466 aa).

Residues asparagine 80, methionine 109, tyrosine 139, histidine 175, serine 195 to glycine 197, aspartate 236 to arginine 239, and glutamate 275 each bind substrate. Zn(2+) is bound at residue histidine 279. Residue tyrosine 302 participates in substrate binding. Histidine 343 lines the Zn(2+) pocket. [4Fe-4S] cluster contacts are provided by cysteine 423, cysteine 426, and cysteine 431.

The protein belongs to the ThiC family. Requires [4Fe-4S] cluster as cofactor.

The catalysed reaction is 5-amino-1-(5-phospho-beta-D-ribosyl)imidazole + S-adenosyl-L-methionine = 4-amino-2-methyl-5-(phosphooxymethyl)pyrimidine + CO + 5'-deoxyadenosine + formate + L-methionine + 3 H(+). It participates in cofactor biosynthesis; thiamine diphosphate biosynthesis. In terms of biological role, catalyzes the synthesis of the hydroxymethylpyrimidine phosphate (HMP-P) moiety of thiamine from aminoimidazole ribotide (AIR) in a radical S-adenosyl-L-methionine (SAM)-dependent reaction. The sequence is that of Phosphomethylpyrimidine synthase from Prochlorococcus marinus (strain NATL1A).